The primary structure comprises 945 residues: Isoleucine--tRNA ligase (945 aa).

Residues 66-76 (PYANGDIHLGH) carry the 'HIGH' region motif. Glutamate 581 contributes to the L-isoleucyl-5'-AMP binding site. The short motif at 622-626 (KMSKS) is the 'KMSKS' region element. Lysine 625 is an ATP binding site. Zn(2+) is bound by residues cysteine 908, cysteine 911, cysteine 928, and cysteine 931.

This sequence belongs to the class-I aminoacyl-tRNA synthetase family. IleS type 1 subfamily. As to quaternary structure, monomer. It depends on Zn(2+) as a cofactor.

The protein localises to the cytoplasm. It catalyses the reaction tRNA(Ile) + L-isoleucine + ATP = L-isoleucyl-tRNA(Ile) + AMP + diphosphate. Catalyzes the attachment of isoleucine to tRNA(Ile). As IleRS can inadvertently accommodate and process structurally similar amino acids such as valine, to avoid such errors it has two additional distinct tRNA(Ile)-dependent editing activities. One activity is designated as 'pretransfer' editing and involves the hydrolysis of activated Val-AMP. The other activity is designated 'posttransfer' editing and involves deacylation of mischarged Val-tRNA(Ile). In Burkholderia lata (strain ATCC 17760 / DSM 23089 / LMG 22485 / NCIMB 9086 / R18194 / 383), this protein is Isoleucine--tRNA ligase.